A 312-amino-acid chain; its full sequence is Apolipoprotein E (312 aa).

The first 18 residues, Met1–Ala18, serve as a signal peptide directing secretion. 8 tandem repeats follow at residues Val72 to Gly93, Pro94 to Gly115, Ala116 to Gly137, Gln138 to Met159, Arg160 to Glu181, Arg182 to Ala203, Asn204 to Arg225, and Gly226 to Glu247. The 8 X 22 AA approximate tandem repeats stretch occupies residues Val72–Glu247. Met135 bears the Methionine sulfoxide mark. Ser139 carries the post-translational modification Phosphoserine. The interval His150 to Arg160 is LDL and other lipoprotein receptors binding. Met154–Arg157 provides a ligand contact to heparin. A lipid-binding and lipoprotein association region spans residues Thr202–Met282. Gly221–Leu228 provides a ligand contact to heparin. A homooligomerization region spans residues Gln258–Gln312. A specificity for association with VLDL region spans residues Arg270–Met282.

Belongs to the apolipoprotein A1/A4/E family. In terms of assembly, homotetramer. May interact with ABCA1; functionally associated with ABCA1 in the biogenesis of HDLs. May interact with APP/A4 amyloid-beta peptide; the interaction is extremely stable in vitro but its physiological significance is unclear. May interact with MAPT. May interact with MAP2. In the cerebrospinal fluid, interacts with secreted SORL1. Interacts with PMEL; this allows the loading of PMEL luminal fragment on ILVs to induce fibril nucleation. Post-translationally, APOE exists as multiple glycosylated and sialylated glycoforms within cells and in plasma. The extent of glycosylation and sialylation are tissue and context specific. In terms of processing, glycated in plasma VLDL. Phosphorylated by FAM20C in the extracellular medium.

The protein localises to the secreted. It is found in the extracellular space. It localises to the extracellular matrix. Its subcellular location is the extracellular vesicle. The protein resides in the endosome. The protein localises to the multivesicular body. Functionally, APOE is an apolipoprotein, a protein associating with lipid particles, that mainly functions in lipoprotein-mediated lipid transport between organs via the plasma and interstitial fluids. APOE is a core component of plasma lipoproteins and is involved in their production, conversion and clearance. Apolipoproteins are amphipathic molecules that interact both with lipids of the lipoprotein particle core and the aqueous environment of the plasma. As such, APOE associates with chylomicrons, chylomicron remnants, very low density lipoproteins (VLDL) and intermediate density lipoproteins (IDL) but shows a preferential binding to high-density lipoproteins (HDL). It also binds a wide range of cellular receptors including the LDL receptor/LDLR, the LDL receptor-related proteins LRP1, LRP2 and LRP8 and the very low-density lipoprotein receptor/VLDLR that mediate the cellular uptake of the APOE-containing lipoprotein particles. Finally, APOE also has a heparin-binding activity and binds heparan-sulfate proteoglycans on the surface of cells, a property that supports the capture and the receptor-mediated uptake of APOE-containing lipoproteins by cells. A main function of APOE is to mediate lipoprotein clearance through the uptake of chylomicrons, VLDLs, and HDLs by hepatocytes. APOE is also involved in the biosynthesis by the liver of VLDLs as well as their uptake by peripheral tissues ensuring the delivery of triglycerides and energy storage in muscle, heart and adipose tissues. By participating in the lipoprotein-mediated distribution of lipids among tissues, APOE plays a critical role in plasma and tissues lipid homeostasis. APOE is also involved in two steps of reverse cholesterol transport, the HDLs-mediated transport of cholesterol from peripheral tissues to the liver, and thereby plays an important role in cholesterol homeostasis. First, it is functionally associated with ABCA1 in the biogenesis of HDLs in tissues. Second, it is enriched in circulating HDLs and mediates their uptake by hepatocytes. APOE also plays an important role in lipid transport in the central nervous system, regulating neuron survival and sprouting. This is Apolipoprotein E (Apoe) from Mus pahari (Gairdner's shrew-mouse).